The chain runs to 589 residues: Probable translation initiation factor IF-2 (589 aa).

Residues Leu14–Glu229 form the tr-type G domain. The segment at Gly23 to Thr30 is G1. Position 23-30 (Gly23–Thr30) interacts with GTP. The segment at Gly48–Arg52 is G2. The segment at Asp84–Gly87 is G3. GTP is bound by residues Asp84 to His88 and Asn138 to Asp141. A G4 region spans residues Asn138 to Asp141. The interval Ser206–Lys208 is G5.

The protein belongs to the TRAFAC class translation factor GTPase superfamily. Classic translation factor GTPase family. IF-2 subfamily.

Function in general translation initiation by promoting the binding of the formylmethionine-tRNA to ribosomes. Seems to function along with eIF-2. In Thermoplasma acidophilum (strain ATCC 25905 / DSM 1728 / JCM 9062 / NBRC 15155 / AMRC-C165), this protein is Probable translation initiation factor IF-2 (infB).